Consider the following 295-residue polypeptide: MRSTNSFVVHNWVSLVPEMEMDTQERLYLLVDGAQISHLAQALYRLSGELVLEPLYLFPPFEQLKEVSPYLVLATDTVKTWFLEQNQGLAGFFFASLDSIEEIAEQLRRLIQVESPYGSTVFLKMANSECAYVLLSTQCQPLWKVINRAWLPTRQGWQYVQRPELTATQDTPVRFKLTDEQWQRLGNITWLNTLETVERHVQQWFPDLAQQWQSDPELFHRHAQWAYQQGFSSERDLMLFFNVLGFLGVDALEKGKYPEIDPLLHQASSRTPSQRIEAAAELAYQHSQSSQEVQG.

Its function is as follows. Plays an accessory role in VasX-mediated bacterial killing. The chain is Accessory protein VasW from Vibrio cholerae serotype O1 (strain ATCC 39315 / El Tor Inaba N16961).